Here is a 1598-residue protein sequence, read N- to C-terminus: Fatty acid synthase subunit alpha (1598 aa).

The interval 96 to 134 (RTQPHKSSAPQEPVPKAAPKAAPPVPVATAPLPEPGRQV) is disordered. Residues 104–115 (APQEPVPKAAPK) show a composition bias toward low complexity. Residues 143–221 (DVPIQSRDVI…QIVSGSTSTT (79 aa)) enclose the Carrier domain. Serine 181 bears the O-(pantetheine 4'-phosphoryl)serine mark. The ketoreductase (KR) domain stretch occupies residues 543-784 (LKGKTVLLTG…LAALLVNPFA (242 aa)). Residues 818–844 (KQDSTSTPTHQHLPSHHHVDEPEIGKP) are disordered. Polar residues predominate over residues 820–829 (DSTSTPTHQH). A Ketosynthase family 3 (KS3) domain is found at 992–1524 (HEIVLTRDLA…QKGAQAIIVH (533 aa)). Cysteine 1175 functions as the For beta-ketoacyl synthase activity in the catalytic mechanism. Residues 1280-1301 (ASDKTGRSVPSPGKGTLTNARE) are disordered. Residues histidine 1409 and histidine 1450 each act as for beta-ketoacyl synthase activity in the active site.

It belongs to the thiolase-like superfamily. Fungal fatty acid synthetase subunit alpha family. In terms of assembly, fatty acid synthase is composed of alpha and beta subunits.

It catalyses the reaction acetyl-CoA + n malonyl-CoA + 2n NADPH + 4n H(+) = a long-chain-acyl-CoA + n CoA + n CO2 + 2n NADP(+).. The enzyme catalyses a fatty acyl-[ACP] + malonyl-[ACP] + H(+) = a 3-oxoacyl-[ACP] + holo-[ACP] + CO2. It carries out the reaction a (3R)-hydroxyacyl-[ACP] + NADP(+) = a 3-oxoacyl-[ACP] + NADPH + H(+). It functions in the pathway mycotoxin biosynthesis. Functionally, fatty acid synthase subunit alpha; part of the gene cluster that mediates the biosynthesis of gramillins A and B, bicyclic lipopeptides that induce cell death in maize leaves but not in wheat leaves. The nonribosomal peptide synthetase GRA1 incorporates respectively a glutamic adic (Glu), a leucine (Leu), a serine (Ser), a hydroxyglutamine (HOGln), a 2-amino decanoic acid, and 2 cysteins (CysB and CysA). The biosynthesis of 2-amino decanoic acid incorporated in gramillins could be initiated by a fatty acid synthase composed of the alpha and beta subunits FGSG_00036 and FGSG_11656. The cytochrome P450 monooxygenase FGSG_15680 could hydroxylate the fatty acid chain. Subsequent oxidation to the ketone by the oxidoreductase FGSG_00048 and transamination by aminotransferase FGSG_00049 could form 2-amino-decanoic acid. On the other hand, FGSG_15680 could also be responsible for the HO-modified glutamine at the gamma-position. Whether hydroxylation occurs on the fully assembled product or on the Gln residue prior to assembly into the gramillins requires further proof. The thioredoxin FGSG_00043 could also be required for the disulfide-bond formation between CysA and CysB. The specific involvement of the remaining proteins from the cluster is more difficult to discern, but could have broader regulatory (FGSG_00040 and FGSG_11657) or enzymatic functions (FGSG_00044 and FGSG_00045). The final C-domain of GRA1 does not possess the expected sequence of a termination CT domain, often implicated in macrocyclization and release of a cyclopeptidein fungal NRPs; and the thioesterase FGSG_00047 may act in concert with the terminal C-domain of GRA1 to catalyze the formation of the macrocyclic anhydride and release of the products. The sequence is that of Fatty acid synthase subunit alpha from Gibberella zeae (strain ATCC MYA-4620 / CBS 123657 / FGSC 9075 / NRRL 31084 / PH-1) (Wheat head blight fungus).